We begin with the raw amino-acid sequence, 382 residues long: Cell division protein DivIB (382 aa).

Over 1-103 (MAKDKEKQSD…SATQIAFQKS (103 aa)) the chain is Cytoplasmic. 2 stretches are compositionally biased toward basic and acidic residues: residues 36-49 (EKKL…DKKA) and 60-70 (VELKTDEKTDS). Residues 36–92 (EKKLKEKLLSDKKAQQQAQNASEAVELKTDEKTDSQEIESETTSKPKKTKKVRQPKE) form a disordered region. A helical transmembrane segment spans residues 104–124 (LPVLLGALLLMAVSIFMITPY). The POTRA domain maps to 125–196 (SKKKEFSVRG…NHFLFNVIEF (72 aa)). The Extracellular portion of the chain corresponds to 125-382 (SKKKEFSVRG…PETVLEQAHG (258 aa)). A disordered region spans residues 322–382 (QEIENQPEVP…PETVLEQAHG (61 aa)). The segment covering 338–352 (AADKEGDKPGEHQEQ) has biased composition (basic and acidic residues).

Belongs to the FtsQ/DivIB family. DivIB subfamily.

It is found in the cell membrane. Functionally, cell division protein that may be involved in stabilizing or promoting the assembly of the division complex. The polypeptide is Cell division protein DivIB (Streptococcus pyogenes serotype M2 (strain MGAS10270)).